We begin with the raw amino-acid sequence, 202 residues long: Recombination protein RecR (202 aa).

The segment at 58 to 73 adopts a C4-type zinc-finger fold; sequence CANCGNLTDKKLCDIC. The Toprim domain occupies 81–178; sequence SVITVVEDSM…KVSRIAMGVP (98 aa).

Belongs to the RecR family.

In terms of biological role, may play a role in DNA repair. It seems to be involved in an RecBC-independent recombinational process of DNA repair. It may act with RecF and RecO. The sequence is that of Recombination protein RecR from Finegoldia magna (strain ATCC 29328 / DSM 20472 / WAL 2508) (Peptostreptococcus magnus).